Consider the following 264-residue polypeptide: tRNA (guanine-N(1)-)-methyltransferase (264 aa).

S-adenosyl-L-methionine-binding positions include G125 and L145–L150.

The protein belongs to the RNA methyltransferase TrmD family. As to quaternary structure, homodimer.

The protein resides in the cytoplasm. It catalyses the reaction guanosine(37) in tRNA + S-adenosyl-L-methionine = N(1)-methylguanosine(37) in tRNA + S-adenosyl-L-homocysteine + H(+). Functionally, specifically methylates guanosine-37 in various tRNAs. This Burkholderia cenocepacia (strain ATCC BAA-245 / DSM 16553 / LMG 16656 / NCTC 13227 / J2315 / CF5610) (Burkholderia cepacia (strain J2315)) protein is tRNA (guanine-N(1)-)-methyltransferase.